Consider the following 369-residue polypeptide: Maltose/maltodextrin import ATP-binding protein MalK (369 aa).

One can recognise an ABC transporter domain in the interval 4–234 (VQLRNVTKAW…PADRFVAGFI (231 aa)). 36–43 (GPSGCGKS) is a binding site for ATP.

This sequence belongs to the ABC transporter superfamily. Maltooligosaccharide importer (TC 3.A.1.1.1) family. As to quaternary structure, the complex is composed of two ATP-binding proteins (MalK), two transmembrane proteins (MalG and MalK) and a solute-binding protein (MalE).

It is found in the cell inner membrane. It catalyses the reaction D-maltose(out) + ATP + H2O = D-maltose(in) + ADP + phosphate + H(+). Its function is as follows. Part of the ABC transporter complex MalEFGK involved in maltose/maltodextrin import. Responsible for energy coupling to the transport system. This is Maltose/maltodextrin import ATP-binding protein MalK from Salmonella choleraesuis (strain SC-B67).